A 238-amino-acid chain; its full sequence is 4-hydroxy-tetrahydrodipicolinate reductase (238 aa).

Position 12–17 (12–17) interacts with NAD(+); that stretch reads GASGRM. Residue Arg40 participates in NADP(+) binding. NAD(+) contacts are provided by residues 93 to 95 and 117 to 120; these read GTT and ASNF. His149 acts as the Proton donor/acceptor in catalysis. Residue His150 participates in (S)-2,3,4,5-tetrahydrodipicolinate binding. Lys153 acts as the Proton donor in catalysis. 159 to 160 provides a ligand contact to (S)-2,3,4,5-tetrahydrodipicolinate; the sequence is GT.

The protein belongs to the DapB family.

Its subcellular location is the cytoplasm. The enzyme catalyses (S)-2,3,4,5-tetrahydrodipicolinate + NAD(+) + H2O = (2S,4S)-4-hydroxy-2,3,4,5-tetrahydrodipicolinate + NADH + H(+). The catalysed reaction is (S)-2,3,4,5-tetrahydrodipicolinate + NADP(+) + H2O = (2S,4S)-4-hydroxy-2,3,4,5-tetrahydrodipicolinate + NADPH + H(+). It functions in the pathway amino-acid biosynthesis; L-lysine biosynthesis via DAP pathway; (S)-tetrahydrodipicolinate from L-aspartate: step 4/4. Functionally, catalyzes the conversion of 4-hydroxy-tetrahydrodipicolinate (HTPA) to tetrahydrodipicolinate. This Xanthomonas campestris pv. campestris (strain 8004) protein is 4-hydroxy-tetrahydrodipicolinate reductase.